The chain runs to 1856 residues: Golgi-specific brefeldin A-resistance guanine nucleotide exchange factor 1 (1856 aa).

The interval 1–211 (MVDKNIYIIQ…EPKSYVGTNM (211 aa)) is DCB (dimerization and cyclophiln-binding); DCB:DCB domain and DCB:HUS domain interaction. The interval 1–378 (MVDKNIYIIQ…SVHDMDYVNP (378 aa)) is interaction with RAB1B. Disordered regions lie at residues 215–256 (KMRA…NGAT) and 291–370 (DSGL…SASV). The span at 227 to 241 (WKKQKRSPRPPRHMT) shows a compositional bias: basic residues. Over residues 316-328 (RESTTTESGSNEI) the composition is skewed to polar residues. Serine 349 and serine 352 each carry phosphoserine. Threonine 505 is subject to Phosphothreonine. Residues 528 to 548 (RIPSFVTELYINYDCDYYCAN) form an HUS (homology upstream of Sec7); DCB:HUS domain interaction region. Residues 601–626 (QEKKETSRPSYEAVDSTQEANSTERA) are disordered. Over residues 615-625 (DSTQEANSTER) the composition is skewed to polar residues. The 191-residue stretch at 690–880 (ELIEIKNKKK…EDMYHAIKNE (191 aa)) folds into the SEC7 domain. The phosphatidylinositol-phosphate binding; required for translocation to the leading edge and for ARF1 activation upon GPCR signaling stretch occupies residues 884 to 1370 (MPEEQTGLVR…LSRPSPSPLV (487 aa)). Low complexity predominate over residues 1284 to 1294 (TARADAPDAGA). A disordered region spans residues 1284–1333 (TARADAPDAGAQSDSELPSYHQNDVSLDRGYTSDSEVYTDHGRPGKIHRS). The segment covering 1295–1308 (QSDSELPSYHQNDV) has biased composition (polar residues). Residue serine 1296 is modified to Phosphoserine. At tyrosine 1314 the chain carries Phosphotyrosine. Residues serine 1316, serine 1318, and serine 1333 each carry the phosphoserine modification. Phosphothreonine; by AMPK is present on threonine 1335. Disordered regions lie at residues 1430 to 1484 (CKSQ…EGVP), 1739 to 1806 (THLT…PPLI), and 1837 to 1856 (PVPL…SEVN). Residues 1432 to 1446 (SQDKRGKSHKYDSKG) show a composition bias toward basic and acidic residues. Serine 1475 and serine 1781 each carry phosphoserine. Positions 1775–1793 (SSSSPGSPVASSPSRLSPS) are enriched in low complexity.

As to quaternary structure, can form homodimers and probably homotetramers. Interacts with COPG1; the interaction is independent on ARF1 activation. Interacts with ARF1, ARF3, ARF4 and ARF5. Interacts with RAB1B (GTP-bound form); required for GBF1 membrane association. Interacts with GGA1, GGA2 and GGA3. Interacts with USO1. Interacts (via SEC7 domain) with PNPLA2 (via C-terminus); the interaction is direct. Can form homodimers and probably homotetramers. Interacts with COPG1; the interaction is independent on ARF1 activation. Interacts with ARF1, ARF3, ARF4 and ARF5. Interacts with RAB1B (GTP-bound form); required for GBF1 membrane association. Interacts with GGA1, GGA2 and GGA3. Interacts with USO1. Interacts (via SEC7 domain) with PNPLA2 (via C-terminus); the interaction is direct. Interacts with ARMH3.

It is found in the golgi apparatus. The protein localises to the cis-Golgi network. Its subcellular location is the endoplasmic reticulum-Golgi intermediate compartment. It localises to the trans-Golgi network. The protein resides in the cytoplasm. It is found in the lipid droplet. The protein localises to the membrane. Inhibited by brefeldin A (BFA). Inhibited by golgicide A (GCA). In terms of biological role, guanine-nucleotide exchange factor (GEF) for members of the Arf family of small GTPases involved in trafficking in the early secretory pathway; its GEF activity initiates the coating of nascent vesicles via the localized generation of activated ARFs through replacement of GDP with GTP. Recruitment to cis-Golgi membranes requires membrane association of Arf-GDP and can be regulated by ARF1, ARF3, ARF4 and ARF5. Involved in the recruitment of the COPI coat complex to cellular membranes such as the endoplasmic reticulum exit sites (ERES), and the endoplasmic reticulum-Golgi intermediate (ERGIC) and cis-Golgi compartments implicating ARF1 activation. Involved in COPI vesicle-dependent retrograde transport from the ERGIC and cis-Golgi compartments to the endoplasmic reticulum (ER). Involved in the trans-Golgi network recruitment of GGA1, GGA2, GGA3, BIG1, BIG2, and the AP-1 adaptor protein complex related to chlathrin-dependent transport; the function requires its GEF activity (probably at least in part on ARF4 and ARF5). Has GEF activity towards ARF1. Has in vitro GEF activity towards ARF5. Involved in the processing of PSAP. Required for the assembly of the Golgi apparatus. The AMPK-phosphorylated form is involved in Golgi disassembly during mitotis and under stress conditions. May be involved in the COPI vesicle-dependent recruitment of PNPLA2 to lipid droplets. In neutrophils, involved in G protein-coupled receptor (GPCR)-mediated chemotaxis und superoxide production. Proposed to be recruited by phosphatidylinositol-phosphates generated upon GPCR stimulation to the leading edge where it recruits and activates ARF1, and is involved in recruitment of GIT2 and the NADPH oxidase complex. Plays a role in maintaining mitochondrial morphology. This is Golgi-specific brefeldin A-resistance guanine nucleotide exchange factor 1 (GBF1) from Cricetulus griseus (Chinese hamster).